The primary structure comprises 384 residues: Outer membrane protein assembly factor BamB (384 aa).

Positions 1-21 (MKLTLKRKFIAVLALTSLLGA) are cleaved as a signal peptide. A lipid anchor (N-palmitoyl cysteine) is attached at C22. C22 is lipidated: S-diacylglycerol cysteine.

The protein belongs to the BamB family. In terms of assembly, part of the Bam complex.

The protein localises to the cell outer membrane. Its function is as follows. Part of the outer membrane protein assembly complex, which is involved in assembly and insertion of beta-barrel proteins into the outer membrane. The chain is Outer membrane protein assembly factor BamB from Taylorella asinigenitalis (strain MCE3).